We begin with the raw amino-acid sequence, 348 residues long: Dihydroorotase (348 aa).

Zn(2+)-binding residues include His-17 and His-19. Residues 19–21 and Asn-45 each bind substrate; that span reads HLR. Lys-103, His-140, and His-178 together coordinate Zn(2+). Residue Lys-103 is modified to N6-carboxylysine. Residue His-140 coordinates substrate. Residue Leu-223 participates in substrate binding. A Zn(2+)-binding site is contributed by Asp-251. Asp-251 is an active-site residue. Substrate is bound by residues His-255 and Ala-267.

This sequence belongs to the metallo-dependent hydrolases superfamily. DHOase family. Class II DHOase subfamily. In terms of assembly, homodimer. Zn(2+) is required as a cofactor.

It carries out the reaction (S)-dihydroorotate + H2O = N-carbamoyl-L-aspartate + H(+). It functions in the pathway pyrimidine metabolism; UMP biosynthesis via de novo pathway; (S)-dihydroorotate from bicarbonate: step 3/3. Functionally, catalyzes the reversible cyclization of carbamoyl aspartate to dihydroorotate. The protein is Dihydroorotase of Cronobacter sakazakii (strain ATCC BAA-894) (Enterobacter sakazakii).